A 333-amino-acid polypeptide reads, in one-letter code: Diaminopimelate epimerase (333 aa).

Positions 24 and 79 each coordinate substrate. The active-site Proton donor is the Cys88. Substrate contacts are provided by residues Gly89 to Asn90, Asn176, Asn210, and Glu228 to Arg229. Cys237 serves as the catalytic Proton acceptor. Gly238 to Thr239 is a substrate binding site.

The protein belongs to the diaminopimelate epimerase family. As to quaternary structure, homodimer.

It localises to the cytoplasm. It catalyses the reaction (2S,6S)-2,6-diaminopimelate = meso-2,6-diaminopimelate. The protein operates within amino-acid biosynthesis; L-lysine biosynthesis via DAP pathway; DL-2,6-diaminopimelate from LL-2,6-diaminopimelate: step 1/1. Functionally, catalyzes the stereoinversion of LL-2,6-diaminopimelate (L,L-DAP) to meso-diaminopimelate (meso-DAP), a precursor of L-lysine and an essential component of the bacterial peptidoglycan. This chain is Diaminopimelate epimerase, found in Clostridium acetobutylicum (strain ATCC 824 / DSM 792 / JCM 1419 / IAM 19013 / LMG 5710 / NBRC 13948 / NRRL B-527 / VKM B-1787 / 2291 / W).